Consider the following 66-residue polypeptide: Toxin Boma6c (66 aa).

The region spanning 2–64 (RDAYIAQNYN…VPIRIPGKCH (63 aa)) is the LCN-type CS-alpha/beta domain. 4 disulfides stabilise this stretch: cysteine 12/cysteine 63, cysteine 16/cysteine 36, cysteine 22/cysteine 46, and cysteine 26/cysteine 48.

It belongs to the long (4 C-C) scorpion toxin superfamily. Sodium channel inhibitor family. Alpha subfamily. As to expression, expressed by the venom gland.

It localises to the secreted. In terms of biological role, alpha toxins bind voltage-independently at site-3 of sodium channels (Nav) and inhibit the inactivation of the activated channels, thereby blocking neuronal transmission. The polypeptide is Toxin Boma6c (Buthus occitanus mardochei (Moroccan scorpion)).